The chain runs to 280 residues: Foldase protein PrsA 4 (280 aa).

The first 21 residues, 1 to 21 (MKRKKLVIGSILMGMTLSLSA), serve as a signal peptide directing secretion. Cys-22 carries N-palmitoyl cysteine lipidation. Cys-22 carries the S-diacylglycerol cysteine lipid modification. The region spanning 132–222 (KPKLQVSHIL…FGYHIIKLTD (91 aa)) is the PpiC domain.

The protein belongs to the PrsA family.

The protein localises to the cell membrane. The catalysed reaction is [protein]-peptidylproline (omega=180) = [protein]-peptidylproline (omega=0). Functionally, plays a major role in protein secretion by helping the post-translocational extracellular folding of several secreted proteins. This chain is Foldase protein PrsA 4 (prsA4), found in Bacillus cereus (strain ATCC 14579 / DSM 31 / CCUG 7414 / JCM 2152 / NBRC 15305 / NCIMB 9373 / NCTC 2599 / NRRL B-3711).